We begin with the raw amino-acid sequence, 200 residues long: Glycerol-3-phosphate acyltransferase (200 aa).

The next 5 helical transmembrane spans lie at 4-24 (FALC…AVIV), 53-73 (WAAL…VWCG), 80-100 (QFEL…PIFF), 115-135 (IAPI…LVFV), and 138-158 (GYSS…VWWF).

The protein belongs to the PlsY family. In terms of assembly, probably interacts with PlsX.

It is found in the cell inner membrane. The enzyme catalyses an acyl phosphate + sn-glycerol 3-phosphate = a 1-acyl-sn-glycero-3-phosphate + phosphate. It participates in lipid metabolism; phospholipid metabolism. In terms of biological role, catalyzes the transfer of an acyl group from acyl-phosphate (acyl-PO(4)) to glycerol-3-phosphate (G3P) to form lysophosphatidic acid (LPA). This enzyme utilizes acyl-phosphate as fatty acyl donor, but not acyl-CoA or acyl-ACP. The protein is Glycerol-3-phosphate acyltransferase of Actinobacillus succinogenes (strain ATCC 55618 / DSM 22257 / CCUG 43843 / 130Z).